The chain runs to 93 residues: Large ribosomal subunit protein uL23cz/uL23cy (93 aa).

The protein belongs to the universal ribosomal protein uL23 family. In terms of assembly, part of the 50S ribosomal subunit.

It localises to the plastid. The protein localises to the chloroplast. Functionally, binds to 23S rRNA. This is Large ribosomal subunit protein uL23cz/uL23cy (rpl23-A) from Phaseolus angularis (Azuki bean).